The sequence spans 443 residues: Trigger factor (443 aa).

Residues 161 to 246 (GDKVVIDFQG…IKKIMEGKLP (86 aa)) enclose the PPIase FKBP-type domain.

It belongs to the FKBP-type PPIase family. Tig subfamily.

It localises to the cytoplasm. The catalysed reaction is [protein]-peptidylproline (omega=180) = [protein]-peptidylproline (omega=0). Its function is as follows. Involved in protein export. Acts as a chaperone by maintaining the newly synthesized protein in an open conformation. Functions as a peptidyl-prolyl cis-trans isomerase. The protein is Trigger factor of Legionella pneumophila (strain Lens).